The chain runs to 506 residues: MASSLGGDERSEIAFFDLETAVPTKSGEPFAILEFGAILVCPRRLEELYSYSTLVRPTDLSLISTLTKRRSGITRDGVLSAHTFSEIADKVYDILHGRIWAGHNIIRFDCVRIREAFAEIGLSPPEPKATIDSLSLLSQKFGKRAGDMKMASLATYFGLGDQAHRSLDDVRMNLEVVKYCATVLFLESSVPDILTDMSWFSPRKSPRTRSNGKLVANGVRESSTSSSSSPKTDPSSSSVDATIVKNHPIVSLLTECSESDASSYDIEDPIDITTLIGKLRIGTLQTDAAEEAKTVRQQDESPPSPDSDAKDESFLGVNEVSVSSIRASLVPFYRGSLRMKLFHNDTPLHLCWHSLKVRFGISRKFVDHAGRPKLNIIVDAPLDLCKILDAVDAAAHNLPTDSSTNSDWRPTVIRKEGFANYPTARLHISSESNGDDTLCGTQVYQKEEPLGTNQKLDVSSDNLEKLESALLPGTLVDAFFSLEPYSYQQMAGIRLAVKKLVILLKK.

One can recognise an Exonuclease domain in the interval 15 to 176; the sequence is FFDLETAVPT…LDDVRMNLEV (162 aa). Residues D17 and E19 each coordinate Mg(2+). Catalysis depends on H164, which acts as the Proton donor/acceptor. D169 contacts Mg(2+). 2 disordered regions span residues 204 to 240 and 289 to 313; these read KSPRTRSNGKLVANGVRESSTSSSSSPKTDPSSSSVD and AEEAKTVRQQDESPPSPDSDAKDES. Positions 222–238 are enriched in low complexity; it reads SSTSSSSSPKTDPSSSS. The segment covering 290–299 has biased composition (basic and acidic residues); that stretch reads EEAKTVRQQD.

Requires Mg(2+) as cofactor.

Functionally, probable exonuclease that may be involved in enuclation of sieve elements. The sequence is that of Protein NEN3 (NEN3) from Arabidopsis thaliana (Mouse-ear cress).